Here is a 98-residue protein sequence, read N- to C-terminus: Integration host factor subunit alpha (98 aa).

A disordered region spans residues 49–71 (FGNFDLRDKNQRPGRNPKTGEDI).

It belongs to the bacterial histone-like protein family. In terms of assembly, heterodimer of an alpha and a beta chain.

Functionally, this protein is one of the two subunits of integration host factor, a specific DNA-binding protein that functions in genetic recombination as well as in transcriptional and translational control. The sequence is that of Integration host factor subunit alpha from Shewanella sp. (strain ANA-3).